Reading from the N-terminus, the 159-residue chain is Protein-export protein SecB (159 aa).

This sequence belongs to the SecB family. In terms of assembly, homotetramer, a dimer of dimers. One homotetramer interacts with 1 SecA dimer.

It is found in the cytoplasm. Its function is as follows. One of the proteins required for the normal export of preproteins out of the cell cytoplasm. It is a molecular chaperone that binds to a subset of precursor proteins, maintaining them in a translocation-competent state. It also specifically binds to its receptor SecA. In Pseudomonas fluorescens (strain SBW25), this protein is Protein-export protein SecB.